The primary structure comprises 125 residues: Large ribosomal subunit protein eL8 (125 aa).

The protein belongs to the eukaryotic ribosomal protein eL8 family. Part of the 50S ribosomal subunit. Probably part of the RNase P complex.

It localises to the cytoplasm. Functionally, multifunctional RNA-binding protein that recognizes the K-turn motif in ribosomal RNA, the RNA component of RNase P, box H/ACA, box C/D and box C'/D' sRNAs. The protein is Large ribosomal subunit protein eL8 of Metallosphaera sedula (strain ATCC 51363 / DSM 5348 / JCM 9185 / NBRC 15509 / TH2).